Consider the following 943-residue polypeptide: Conidiophore development regulator abaA (943 aa).

Disordered stretches follow at residues 1 to 69 (MSSS…FNGG) and 111 to 133 (TSRQ…HQRG). Positions 29 to 43 (IDTRRSFHGDSRLPL) are enriched in basic and acidic residues. Positions 59–68 (PSSAHSSFNG) are enriched in polar residues. The TEA DNA-binding region spans 161 to 254 (QKDKGGVWRR…QVVKKFFEDL (94 aa)). Over residues 537-555 (EHQRKKEKRSCGKKPDLER) the composition is skewed to basic and acidic residues. Disordered stretches follow at residues 537-575 (EHQR…AAWT) and 809-901 (GAAG…HHPG). Residues 865–889 (DSWTAGSSAGGAPAATPTGPDWGPT) show a composition bias toward low complexity.

It belongs to the TEC1 family.

It is found in the nucleus. Its function is as follows. BrlA, abaA and wetA are pivotal regulators of conidiophore development and conidium maturation. They act individually and together to regulate their own expression and that of numerous other sporulation-specific genes. Binds to the sequence 5'-CATTCY-3', where Y is a pyrimidine, making both major- and minor-groove contacts. This Hapsidospora chrysogena (Acremonium chrysogenum) protein is Conidiophore development regulator abaA.